Reading from the N-terminus, the 105-residue chain is Large ribosomal subunit protein uL23 (105 aa).

The protein belongs to the universal ribosomal protein uL23 family. Part of the 50S ribosomal subunit. Contacts protein L29, and trigger factor when it is bound to the ribosome.

In terms of biological role, one of the early assembly proteins it binds 23S rRNA. One of the proteins that surrounds the polypeptide exit tunnel on the outside of the ribosome. Forms the main docking site for trigger factor binding to the ribosome. This chain is Large ribosomal subunit protein uL23, found in Herminiimonas arsenicoxydans.